The primary structure comprises 144 residues: Short-chain diamines transporter (144 aa).

4 helical membrane passes run Ile9 to Ile29, Glu35 to Phe55, Ile76 to Tyr96, and Ile103 to Phe123.

Belongs to the proteobacterial antimicrobial compound efflux (PACE) (TC 2.A.117) family. In terms of assembly, exists in a monomer-homodimer equilibrium. The dimer is probably the functional form of the protein, and the assembly of the dimer is mediated by binding of chlorhexidine and promoted by high pH conditions.

It localises to the cell inner membrane. Its activity is regulated as follows. Protonation/deprotonation of Glu-15 may play an important role in transporter function. Cadaverin transport is inhibited in the presence of CCCP. Its function is as follows. Mediates the efflux of short-chain diamines when energized by an electrochemical gradient. Recognizes specifically the short-chain diamines cadaverine and putrescine as substrates, and promotes the active transport of these substrates in exchange for a cation. Protons are probably the primary source of energy for transport, however it was not possible to conclude with complete certainty that protons, rather than alternative cations such as Na(+) ions, are exchanged for substrates by AceI. In addition, is involved in resistance to the synthetic biocide chlorhexidine, a widely used antiseptic and disinfectant in both hospital and community settings. Interacts directly with chlorhexidine and mediates its efflux via an energy-dependent mechanism. This is Short-chain diamines transporter from Acinetobacter baumannii (strain ATCC 17978 / DSM 105126 / CIP 53.77 / LMG 1025 / NCDC KC755 / 5377).